The primary structure comprises 173 residues: Photosystem I assembly protein Ycf3 (173 aa).

3 TPR repeats span residues A35–P68, S72–M105, and G120–N153.

The protein belongs to the Ycf3 family.

Its subcellular location is the cellular thylakoid membrane. In terms of biological role, essential for the assembly of the photosystem I (PSI) complex. May act as a chaperone-like factor to guide the assembly of the PSI subunits. The sequence is that of Photosystem I assembly protein Ycf3 from Microcystis aeruginosa (strain NIES-843 / IAM M-2473).